Here is a 217-residue protein sequence, read N- to C-terminus: E3 ubiquitin-protein ligase znrf2 (217 aa).

Disordered regions lie at residues 1 to 27 (MGAKQSSPAANGRTRAYSGSDLPSATA) and 63 to 111 (QFIS…ERST). A lipid anchor (N-myristoyl glycine) is attached at glycine 2. Positions 68–100 (RTRSVGPSARPQSGINIPNSGAYSSADSGNSTP) are enriched in polar residues. The RING-type; atypical zinc-finger motif lies at 174–215 (CAICLEELLQGDTIARLPCLCIYHKGCIDEWFEVNRSCPEHP).

It is found in the endosome membrane. The protein localises to the lysosome membrane. Its subcellular location is the presynaptic cell membrane. The catalysed reaction is S-ubiquitinyl-[E2 ubiquitin-conjugating enzyme]-L-cysteine + [acceptor protein]-L-lysine = [E2 ubiquitin-conjugating enzyme]-L-cysteine + N(6)-ubiquitinyl-[acceptor protein]-L-lysine.. It participates in protein modification; protein ubiquitination. In terms of biological role, may play a role in the establishment and maintenance of neuronal transmission and plasticity via its ubiquitin ligase activity. E3 ubiquitin ligases accept ubiquitin from an E2 ubiquitin-conjugating enzyme in the form of a thioester and then directly transfer the ubiquitin to targeted substrates. The sequence is that of E3 ubiquitin-protein ligase znrf2 (znrf2) from Danio rerio (Zebrafish).